An 83-amino-acid polypeptide reads, in one-letter code: Small ribosomal subunit protein bS16 (83 aa).

It belongs to the bacterial ribosomal protein bS16 family.

The sequence is that of Small ribosomal subunit protein bS16 from Chromobacterium violaceum (strain ATCC 12472 / DSM 30191 / JCM 1249 / CCUG 213 / NBRC 12614 / NCIMB 9131 / NCTC 9757 / MK).